The following is a 278-amino-acid chain: MAAAAFVPIPTDTYKLGFIGAGKMAESIARGVVKSGVLPASRIRTAHLGSARRDAFESFGVKVLDRNDQVVEDSDVIIFSVKPQIVKEVVLQLRPLLSEKQLLVSIVAGVKLKELEDWAGHSRFIRVMPNTPAAVGEAASVMSLGATATGEDGELITKLFGAIGKIWKADEKLFDAVTGLSGSGPAYIFLAIEALADGGVAAGLPRELALGLASQTVLGAASMVARGGKHPGQLKDDVASAGGTTIAGIHELEKGGFRGTLMNAVVSATKRSQEIFKR.

The protein belongs to the pyrroline-5-carboxylate reductase family.

It localises to the cytoplasm. It carries out the reaction L-proline + NADP(+) = (S)-1-pyrroline-5-carboxylate + NADPH + 2 H(+). The enzyme catalyses L-proline + NAD(+) = (S)-1-pyrroline-5-carboxylate + NADH + 2 H(+). It participates in amino-acid biosynthesis; L-proline biosynthesis; L-proline from L-glutamate 5-semialdehyde: step 1/1. The protein is Pyrroline-5-carboxylate reductase of Actinidia chinensis var. chinensis (Chinese soft-hair kiwi).